Reading from the N-terminus, the 101-residue chain is Small ribosomal subunit protein bS6 (101 aa).

This sequence belongs to the bacterial ribosomal protein bS6 family.

Its function is as follows. Binds together with bS18 to 16S ribosomal RNA. This chain is Small ribosomal subunit protein bS6, found in Paenarthrobacter aurescens (strain TC1).